Here is a 356-residue protein sequence, read N- to C-terminus: tRNA-specific 2-thiouridylase MnmA 1 (356 aa).

ATP contacts are provided by residues 8–15 (GMSGGVDS) and Met34. Cys103 (nucleophile) is an active-site residue. Cys103 and Cys199 are disulfide-bonded. An ATP-binding site is contributed by Gly127. The tract at residues 149–151 (KDQ) is interaction with tRNA. Cys199 functions as the Cysteine persulfide intermediate in the catalytic mechanism. An interaction with tRNA region spans residues 305–306 (RY).

Belongs to the MnmA/TRMU family.

Its subcellular location is the cytoplasm. The catalysed reaction is S-sulfanyl-L-cysteinyl-[protein] + uridine(34) in tRNA + AH2 + ATP = 2-thiouridine(34) in tRNA + L-cysteinyl-[protein] + A + AMP + diphosphate + H(+). Functionally, catalyzes the 2-thiolation of uridine at the wobble position (U34) of tRNA, leading to the formation of s(2)U34. The chain is tRNA-specific 2-thiouridylase MnmA 1 from Clostridium botulinum (strain ATCC 19397 / Type A).